The following is a 485-amino-acid chain: Cobyric acid synthase (485 aa).

Residues 250–448 (TQTVAVIAYP…LHGMFEDPRV (199 aa)) form the GATase cobBQ-type domain. Cys-334 (nucleophile) is an active-site residue. Residue His-440 is part of the active site.

It belongs to the CobB/CobQ family. CobQ subfamily.

It functions in the pathway cofactor biosynthesis; adenosylcobalamin biosynthesis. Its function is as follows. Catalyzes amidations at positions B, D, E, and G on adenosylcobyrinic A,C-diamide. NH(2) groups are provided by glutamine, and one molecule of ATP is hydrogenolyzed for each amidation. The polypeptide is Cobyric acid synthase (Polaromonas naphthalenivorans (strain CJ2)).